The primary structure comprises 189 residues: GTP cyclohydrolase 1 (189 aa).

Residues cysteine 78, histidine 81, and cysteine 150 each contribute to the Zn(2+) site.

It belongs to the GTP cyclohydrolase I family. In terms of assembly, homomer.

It carries out the reaction GTP + H2O = 7,8-dihydroneopterin 3'-triphosphate + formate + H(+). The protein operates within cofactor biosynthesis; 7,8-dihydroneopterin triphosphate biosynthesis; 7,8-dihydroneopterin triphosphate from GTP: step 1/1. This Listeria monocytogenes serotype 4a (strain HCC23) protein is GTP cyclohydrolase 1.